The following is a 355-amino-acid chain: RNA binding protein fox-1 homolog 1 (355 aa).

Residues 1–123 (MNCEREQLRG…QPKRLHVSNI (123 aa)) are disordered. Residues 70–112 (QSHSEQSAADTSAHTVSGTATTDDSAPTDGQPQTQPSENTENK) show a composition bias toward polar residues. Positions 116-174 (KRLHVSNIPFRFRDPDLRQMFGGFGFVTFENSADADRAREKLHGTVVEGRKIEVNNATA) constitute an RRM domain. Arg298 is modified (asymmetric dimethylarginine).

In terms of assembly, binds to the C-terminus of ATXN2.

It localises to the nucleus. The protein localises to the cytoplasm. Functionally, RNA-binding protein that regulates alternative splicing events by binding to 5'-UGCAUGU-3' elements. Prevents binding of U2AF2 to the 3'-splice site. Regulates alternative splicing of tissue-specific exons and of differentially spliced exons during erythropoiesis. This chain is RNA binding protein fox-1 homolog 1 (RBFOX1), found in Bos taurus (Bovine).